The primary structure comprises 81 residues: Mipartoxin-1A (81 aa).

Positions 1-21 (MKTLLLTLVVVTIVCLDLGNS) are cleaved as a signal peptide. Disulfide bonds link cysteine 24/cysteine 42, cysteine 35/cysteine 61, cysteine 65/cysteine 73, and cysteine 74/cysteine 79.

It belongs to the three-finger toxin family. Short-chain subfamily. Expressed by the venom gland.

The protein localises to the secreted. Functionally, snake venom neurotoxin that blocks neuromuscular transmission, presenting a postsynaptic action through the nicotinic acetylcholine receptor (nAChR). Has no cytotoxic activity. This chain is Mipartoxin-1A, found in Micrurus mipartitus (Red-tailed coral snake).